We begin with the raw amino-acid sequence, 671 residues long: tRNA 5-methylaminomethyl-2-thiouridine biosynthesis bifunctional protein MnmC (671 aa).

The tract at residues 1–245 is tRNA (mnm(5)s(2)U34)-methyltransferase; the sequence is MVNVMNTLSF…KREMLWGEKP (245 aa). Positions 272–671 are FAD-dependent cmnm(5)s(2)U34 oxidoreductase; the sequence is VGGGVASLFV…RKLLKGSKVE (400 aa).

It in the N-terminal section; belongs to the methyltransferase superfamily. tRNA (mnm(5)s(2)U34)-methyltransferase family. In the C-terminal section; belongs to the DAO family. Requires FAD as cofactor.

It is found in the cytoplasm. The catalysed reaction is 5-aminomethyl-2-thiouridine(34) in tRNA + S-adenosyl-L-methionine = 5-methylaminomethyl-2-thiouridine(34) in tRNA + S-adenosyl-L-homocysteine + H(+). Catalyzes the last two steps in the biosynthesis of 5-methylaminomethyl-2-thiouridine (mnm(5)s(2)U) at the wobble position (U34) in tRNA. Catalyzes the FAD-dependent demodification of cmnm(5)s(2)U34 to nm(5)s(2)U34, followed by the transfer of a methyl group from S-adenosyl-L-methionine to nm(5)s(2)U34, to form mnm(5)s(2)U34. This Actinobacillus pleuropneumoniae serotype 3 (strain JL03) protein is tRNA 5-methylaminomethyl-2-thiouridine biosynthesis bifunctional protein MnmC.